A 179-amino-acid chain; its full sequence is Ubiquitin-conjugating enzyme E2 2 (179 aa).

The segment at 1-28 (MSTPARRRLMRDFKRMQQDPPSGVSASP) is disordered. The 147-residue stretch at 4 to 150 (PARRRLMRDF…VRETVENSWN (147 aa)) folds into the UBC core domain. The Glycyl thioester intermediate role is filled by C88. Residues 145–179 (VENSWNDDDDEEEEEEDEDEAEDEDDDDDDNIDED) form a disordered region. Residues 149 to 179 (WNDDDDEEEEEEDEDEAEDEDDDDDDNIDED) show a composition bias toward acidic residues. Residues 151 to 179 (DDDDEEEEEEDEDEAEDEDDDDDDNIDED) form an acidic tail region.

This sequence belongs to the ubiquitin-conjugating enzyme family.

The protein resides in the cytoplasm. It localises to the nucleus. The catalysed reaction is S-ubiquitinyl-[E1 ubiquitin-activating enzyme]-L-cysteine + [E2 ubiquitin-conjugating enzyme]-L-cysteine = [E1 ubiquitin-activating enzyme]-L-cysteine + S-ubiquitinyl-[E2 ubiquitin-conjugating enzyme]-L-cysteine.. It participates in protein modification; protein ubiquitination. In terms of biological role, catalyzes the covalent attachment of ubiquitin to other proteins. Plays a role in transcription regulation by catalyzing the monoubiquitination of histone H2B to form H2BK123ub1. H2BK123ub1 gives a specific tag for epigenetic transcriptional activation and is also a prerequisite for H3K4me and H3K79me formation. Also involved in postreplication repair of UV-damaged DNA, in N-end rule-dependent protein degradation and in sporulation. The polypeptide is Ubiquitin-conjugating enzyme E2 2 (UBC2) (Candida albicans (strain SC5314 / ATCC MYA-2876) (Yeast)).